We begin with the raw amino-acid sequence, 554 residues long: ATP-dependent RNA helicase MRH4, mitochondrial (554 aa).

The N-terminal 54 residues, 1–54, are a transit peptide targeting the mitochondrion; the sequence is MSSVGIASASLWLRGPVKSALKGRWLSCEQMRRYGTKSAPAVRKGGHSKKARQA. Positions 119–140 match the Q motif motif; that stretch reads DCGLDDKRVAAFLGQVQPTPIQ. One can recognise a Helicase ATP-binding domain in the interval 150–337; the sequence is TLMEPQLQVH…NKLFPNLQVV (188 aa). An ATP-binding site is contributed by 163 to 170; the sequence is AETGSGKT. Residues 285–288 carry the DEAD box motif; that stretch reads DEAD. The Helicase C-terminal domain occupies 368-554; the sequence is ALAQALYAIM…PVVKKNRPIQ (187 aa). A disordered region spans residues 439–474; sequence RIQDQVRPSELKKPQERRLPNSNIKVADSKDNGQRS. Basic and acidic residues predominate over residues 445 to 457; the sequence is RPSELKKPQERRL.

This sequence belongs to the DEAD box helicase family. MRH4 subfamily.

It is found in the mitochondrion. It catalyses the reaction ATP + H2O = ADP + phosphate + H(+). ATP-binding RNA helicase involved in mitochondrial RNA metabolism. Required for maintenance of mitochondrial DNA. This chain is ATP-dependent RNA helicase MRH4, mitochondrial (MRH4), found in Eremothecium gossypii (strain ATCC 10895 / CBS 109.51 / FGSC 9923 / NRRL Y-1056) (Yeast).